The following is a 1500-amino-acid chain: Secreted chitinase LysM12 (1500 aa).

The signal sequence occupies residues 1–23 (MAPLWNGMAAGLLLSAAVVSGQA). N-linked (GlcNAc...) asparagine glycosylation is found at Asn-53, Asn-225, Asn-251, and Asn-270. 2 consecutive LysM domains span residues 303–348 (RTQK…HVCC) and 367–415 (ATTT…VICI). Positions 428 to 496 (DAECGPQVPG…TNGCISHCGM (69 aa)) constitute a Chitin-binding type-1 domain. 4 disulfide bridges follow: Cys-431–Cys-459, Cys-453–Cys-465, Cys-458–Cys-472, and Cys-490–Cys-494. A GH18 domain is found at 507-879 (FRSVGYYESY…PGMILQMKSG (373 aa)). The active-site Proton donor is the Glu-625. Tyr-626 is a binding site for chitin. N-linked (GlcNAc...) asparagine glycosylation is found at Asn-721 and Asn-800. Trp-852 lines the chitin pocket. N-linked (GlcNAc...) asparagine glycans are attached at residues Asn-892 and Asn-983. Residues 1164–1193 (IPKDIPYPDKTKRKDKDDDDNKKTEATDSE) form a disordered region. Residues 1169–1193 (PYPDKTKRKDKDDDDNKKTEATDSE) are compositionally biased toward basic and acidic residues.

Belongs to the glycosyl hydrolase 18 family. Chitinase class V subfamily.

Its subcellular location is the secreted. It catalyses the reaction Random endo-hydrolysis of N-acetyl-beta-D-glucosaminide (1-&gt;4)-beta-linkages in chitin and chitodextrins.. In terms of biological role, secreted chitinase involved in the degradation of chitin, a component of the cell walls of fungi and exoskeletal elements of some animals (including worms and arthropods). Involved in pathogenesis via manipulation of host defenses for successful infection. The sequence is that of Secreted chitinase LysM12 from Penicillium expansum (Blue mold rot fungus).